We begin with the raw amino-acid sequence, 240 residues long: Glutathione S-transferase theta-1 (240 aa).

Residues 2 to 82 (GLELYLDLLS…YLTRKYKVPD (81 aa)) form the GST N-terminal domain. Glutathione is bound by residues H40, 53 to 54 (KV), and 66 to 67 (ES). Residues 88 to 220 (DLQARARVDE…HEVILKAKDF (133 aa)) enclose the GST C-terminal domain.

This sequence belongs to the GST superfamily. Theta family. Homodimer. In terms of tissue distribution, found in erythrocyte. Expressed at low levels in liver. In lung, expressed at low levels in club cells and ciliated cells at the alveolar/bronchiolar junction. Absent from epithelial cells of larger bronchioles.

It localises to the cytoplasm. It carries out the reaction RX + glutathione = an S-substituted glutathione + a halide anion + H(+). Conjugation of reduced glutathione to a wide number of exogenous and endogenous hydrophobic electrophiles. Acts on 1,2-epoxy-3-(4-nitrophenoxy)propane, phenethylisothiocyanate 4-nitrobenzyl chloride and 4-nitrophenethyl bromide. Displays glutathione peroxidase activity with cumene hydroperoxide. The chain is Glutathione S-transferase theta-1 (GSTT1) from Homo sapiens (Human).